Consider the following 513-residue polypeptide: Serine/threonine-protein kinase PBL27 (513 aa).

The interval 1–61 (MSGCLPCFGS…KKELTAPKEG (61 aa)) is disordered. S-palmitoyl cysteine attachment occurs at residues C4 and C7. Composition is skewed to basic and acidic residues over residues 15–27 (AASK…ELSA) and 38–57 (ISLD…ELTA). The region spanning 83-360 (FRPECLLGEG…GDVVTALTYL (278 aa)) is the Protein kinase domain. ATP contacts are provided by residues 89-97 (LGEGGFGRV) and K112. Residue D210 is the Proton acceptor of the active site. Residue S244 is modified to Phosphoserine; by CERK1. Phosphothreonine; by CERK1 occurs at positions 245 and 250. Over residues 365 to 378 (FDPNAPSGQNSRSG) the composition is skewed to polar residues. Residues 365–513 (FDPNAPSGQN…GPGSFDSTND (149 aa)) are disordered. Residues S392 and S401 each carry the phosphoserine modification. A compositionally biased stretch (basic and acidic residues) spans 417–428 (NSPDYRRRDMVR). Residues 434 to 446 (SEGGSETGGGSGR) are compositionally biased toward gly residues. Positions 456-473 (QESQRGSPASVGRSSRGT) are enriched in polar residues. A compositionally biased stretch (basic and acidic residues) spans 475–486 (RNRDLDRERAVA). Positions 504 to 513 (GPGSFDSTND) are enriched in polar residues.

Belongs to the protein kinase superfamily. Ser/Thr protein kinase family. Interacts with CERK1 (preferentially unphosphorylated) at the plasma membrane. Binds to MAPKKK5 at the plasma membrane; disassociation is induced by chitin perception by the CERK1 complex. Also associates with MAPKKK3. Phosphorylated by CERK1 upon elicitation by chitin. In terms of processing, palmitoylation at Cys-4 and Cys-7 are required for plasma membrane location.

The protein resides in the cell membrane. It catalyses the reaction L-seryl-[protein] + ATP = O-phospho-L-seryl-[protein] + ADP + H(+). It carries out the reaction L-threonyl-[protein] + ATP = O-phospho-L-threonyl-[protein] + ADP + H(+). Its function is as follows. Receptor-like cytoplasmic kinase involved in the transduction of signal between the host cell surface chitin receptor complex CERK1-LYK5 and the intracellular MAPKKK5-dependent mitogen-activated protein kinase (MAPK) cascade that leads to chitin-induced immunity. Phosphorylates and activates MAPKKK5 when phosphorylated by CERK1 after elicitation by chitin. This Arabidopsis thaliana (Mouse-ear cress) protein is Serine/threonine-protein kinase PBL27.